The chain runs to 656 residues: ATP-dependent zinc metalloprotease FtsH (656 aa).

Residues 1 to 45 (MAIFARRIGLNQHSAYGSRQRVIVMKNFGKKALIKQQSPKRVAWT) lie on the Cytoplasmic side of the membrane. A helical membrane pass occupies residues 46 to 66 (GALAASLIMLPTMFGGNPVLA). The Lumenal segment spans residues 67 to 147 (QKAERESLSY…EISSANSRAA (81 aa)). A helical membrane pass occupies residues 148–168 (VGLLINLMWILPLVALMLLFL). Residues 169-656 (RRSTNASSQA…DEQLSMVNSQ (488 aa)) lie on the Cytoplasmic side of the membrane. Position 239 to 246 (239 to 246 (GPPGTGKT)) interacts with ATP. Histidine 460 contributes to the Zn(2+) binding site. Glutamate 461 is a catalytic residue. Histidine 464 and aspartate 538 together coordinate Zn(2+).

The protein in the central section; belongs to the AAA ATPase family. This sequence in the C-terminal section; belongs to the peptidase M41 family. Homohexamer. The cofactor is Zn(2+).

It is found in the cellular thylakoid membrane. Functionally, acts as a processive, ATP-dependent zinc metallopeptidase for both cytoplasmic and membrane proteins. Plays a role in the quality control of integral membrane proteins. In Nostoc sp. (strain PCC 7120 / SAG 25.82 / UTEX 2576), this protein is ATP-dependent zinc metalloprotease FtsH.